The sequence spans 205 residues: Ribosomal RNA small subunit methyltransferase G (205 aa).

S-adenosyl-L-methionine contacts are provided by residues Gly73, Leu78, 124 to 125 (VE), and Arg139.

This sequence belongs to the methyltransferase superfamily. RNA methyltransferase RsmG family.

It localises to the cytoplasm. The catalysed reaction is guanosine(527) in 16S rRNA + S-adenosyl-L-methionine = N(7)-methylguanosine(527) in 16S rRNA + S-adenosyl-L-homocysteine. In terms of biological role, specifically methylates the N7 position of guanine in position 527 of 16S rRNA. The chain is Ribosomal RNA small subunit methyltransferase G from Erwinia tasmaniensis (strain DSM 17950 / CFBP 7177 / CIP 109463 / NCPPB 4357 / Et1/99).